Reading from the N-terminus, the 450-residue chain is UDP-N-acetylmuramoylalanine--D-glutamate ligase (450 aa).

An ATP-binding site is contributed by 118–124 (GSNAKST).

Belongs to the MurCDEF family.

It localises to the cytoplasm. The catalysed reaction is UDP-N-acetyl-alpha-D-muramoyl-L-alanine + D-glutamate + ATP = UDP-N-acetyl-alpha-D-muramoyl-L-alanyl-D-glutamate + ADP + phosphate + H(+). The protein operates within cell wall biogenesis; peptidoglycan biosynthesis. Its function is as follows. Cell wall formation. Catalyzes the addition of glutamate to the nucleotide precursor UDP-N-acetylmuramoyl-L-alanine (UMA). This Pseudomonas putida (strain ATCC 47054 / DSM 6125 / CFBP 8728 / NCIMB 11950 / KT2440) protein is UDP-N-acetylmuramoylalanine--D-glutamate ligase.